The sequence spans 1979 residues: E3 ubiquitin-protein ligase TTC3 (1979 aa).

Positions 1–230 are interaction with POLG; the sequence is MDDFAEGGLS…RHSCMQCVKQ (230 aa). TPR repeat units follow at residues 231 to 264 and 266 to 298; these read GELMKMRGNEEFSKEKFEIAVIYYTRAIEYRPEN and LLYGNRALCFLRMGQFRNALSDGKRAIVLKNTW. Ser-378 carries the post-translational modification Phosphoserine. Residues 422–457 are disordered; that stretch reads CDCHPEFLPPPSQPPRHKGKQKSRNNESEKPSFNSE. TPR repeat units lie at residues 536–572 and 576–609; these read VLVVYGLAVSLLGIGRPEELSEAENQFKRIIEHYPNE and CLAYCGIGKVYLKKNRFLEALNHFEKAKTLISRL. The interval 783–811 is disordered; the sequence is LAQERMEEDLRESNPPKNEEPEETSDSAQ. Ser-1009 is subject to Phosphoserine. Disordered regions lie at residues 1021-1067, 1214-1289, 1402-1427, 1574-1601, 1757-1776, 1788-1821, and 1873-1927; these read NKGK…GPFA, QPDV…EEAK, QGSAADADPALSEPEGNSEHSGSSDS, KNDGFDKECEPHPDQSLGFSSALTDEKT, MDSASGCPEEVPELSLGSPT, KGASQVSPSEQSPEADEKLSGQATRSSQSPKKPS, and DEQK…PAPD. Over residues 1036–1050 the composition is skewed to low complexity; it reads VGSGAASVAPSSEAV. At Ser-1060 the chain carries Phosphoserine. Positions 1214–1227 are enriched in basic and acidic residues; the sequence is QPDVKSEALSEDVK. The span at 1248–1257 shows a compositional bias: low complexity; that stretch reads DSDSSSGSAS. A compositionally biased stretch (basic and acidic residues) spans 1576-1586; it reads DGFDKECEPHP. 2 stretches are compositionally biased toward polar residues: residues 1788–1799 and 1808–1821; these read KGASQVSPSEQS and GQATRSSQSPKKPS. Residue Ser-1794 is modified to Phosphoserine. The span at 1873–1890 shows a compositional bias: basic and acidic residues; the sequence is DEQKKKKPNPGKDKKTSE. The RING-type; atypical zinc finger occupies 1931 to 1971; the sequence is CEICHEIFKSKNMRVLKCGHKFHKGCFKQWLKGQSTCPTCG.

In terms of assembly, interacts (when phosphorylated on Ser-378) with AKT1, AKT2 and AKT3 (when phosphorylated). Interacts with CIT. Interacts with POLG. Interacts with HSP70. Interacts with SMURF2. Phosphorylation on Ser-378 by Akt is required for ubiquitin ligase activity. In terms of processing, proteolytically cleaved into differently sized N- and C-terminal fragments.

Its subcellular location is the nucleus. The protein resides in the cytoplasm. It localises to the golgi apparatus. It carries out the reaction S-ubiquitinyl-[E2 ubiquitin-conjugating enzyme]-L-cysteine + [acceptor protein]-L-lysine = [E2 ubiquitin-conjugating enzyme]-L-cysteine + N(6)-ubiquitinyl-[acceptor protein]-L-lysine.. The protein operates within protein modification; protein ubiquitination. In terms of biological role, E3 ubiquitin-protein ligase which catalyzes the formation of 'Lys-48'-polyubiquitin chains. Mediates the ubiquitination and subsequent degradation of phosphorylated Akt (AKT1, AKT2 and AKT3) in the nucleus. Acts as a terminal regulator of Akt signaling after activation; its phosphorylation by Akt, which is a prerequisite for ubiquitin ligase activity, suggests the existence of a regulation mechanism required to control Akt levels after activation. Positively regulates TGFB1-induced epithelial-mesenchymal transition and myofibroblast differentiation by mediating the ubiquitination and subsequent degradation of SMURF2. Regulates neuronal differentiation by regulating actin remodeling and Golgi organization via a signaling cascade involving RHOA, CIT and ROCK. Inhibits cell proliferation. The protein is E3 ubiquitin-protein ligase TTC3 (Ttc3) of Mus musculus (Mouse).